The sequence spans 258 residues: Type III pantothenate kinase (258 aa).

7–14 (DVGNTRLK) lines the ATP pocket. Residues Tyr96 and 103–106 (GADR) contribute to the substrate site. The Proton acceptor role is filled by Asp105. Residue Thr133 participates in ATP binding. Thr183 is a binding site for substrate.

The protein belongs to the type III pantothenate kinase family. In terms of assembly, homodimer. The cofactor is NH4(+). K(+) is required as a cofactor.

The protein resides in the cytoplasm. The enzyme catalyses (R)-pantothenate + ATP = (R)-4'-phosphopantothenate + ADP + H(+). It participates in cofactor biosynthesis; coenzyme A biosynthesis; CoA from (R)-pantothenate: step 1/5. Its function is as follows. Catalyzes the phosphorylation of pantothenate (Pan), the first step in CoA biosynthesis. The sequence is that of Type III pantothenate kinase from Acidovorax ebreus (strain TPSY) (Diaphorobacter sp. (strain TPSY)).